The sequence spans 783 residues: B-cell scaffold protein with ankyrin repeats (783 aa).

Residues 1-154 (MLPVASGTRG…GYISVIRQIL (154 aa)) form an interaction with ITPR2 region. The region spanning 25 to 153 (NAKDILLLYE…DGYISVIRQI (129 aa)) is the TIR domain. Positions 199–326 (VLPGEIPCEK…EIPYYEFKHL (128 aa)) constitute a DBB domain. ANK repeat units lie at residues 341–370 (ELPT…ATRA) and 377–407 (DGSD…NTGR). Disordered stretches follow at residues 422 to 521 (FSTY…AASQ), 538 to 586 (MERS…EDNE), 604 to 624 (SFII…PPKE), and 641 to 670 (RQSD…STRD). The span at 444–479 (RNTDRSEEPERSVEMKEEEAGAEARRSLSEGERESS) shows a compositional bias: basic and acidic residues. Positions 505–515 (HCRPPLLPPRP) are enriched in pro residues. The segment covering 549–565 (ARPETREESSREEKKEE) has biased composition (basic and acidic residues). Residues 566 to 586 (AQEEEEEEENPYAFAETEDNE) show a composition bias toward acidic residues. Residues 610–620 (PPAPTPRPTHI) show a composition bias toward pro residues. The segment covering 641–660 (RQSDGDKFYSLPKKPDKTRM) has biased composition (basic and acidic residues). Tyrosine 649 carries the post-translational modification Phosphotyrosine.

As to quaternary structure, interacts with LYN, ITPR1 and ITPR2. Post-translationally, phosphorylated on tyrosines upon BCR activation. Specifically expressed in spleen. Highly expressed in immature B-cells and recirculating B-cells, and at low levels in pro-B and pre-B cells.

Functionally, involved in B-cell receptor (BCR)-induced Ca(2+) mobilization from intracellular stores. Promotes Lyn-mediated phosphorylation of IP3 receptors 1 and 2. The chain is B-cell scaffold protein with ankyrin repeats (Bank1) from Mus musculus (Mouse).